Here is a 173-residue protein sequence, read N- to C-terminus: Crossover junction endodeoxyribonuclease RuvC (173 aa).

Catalysis depends on residues Asp-8, Glu-69, and Asp-141. Mg(2+) contacts are provided by Asp-8, Glu-69, and Asp-141.

Belongs to the RuvC family. In terms of assembly, homodimer which binds Holliday junction (HJ) DNA. The HJ becomes 2-fold symmetrical on binding to RuvC with unstacked arms; it has a different conformation from HJ DNA in complex with RuvA. In the full resolvosome a probable DNA-RuvA(4)-RuvB(12)-RuvC(2) complex forms which resolves the HJ. Mg(2+) serves as cofactor.

Its subcellular location is the cytoplasm. It carries out the reaction Endonucleolytic cleavage at a junction such as a reciprocal single-stranded crossover between two homologous DNA duplexes (Holliday junction).. Functionally, the RuvA-RuvB-RuvC complex processes Holliday junction (HJ) DNA during genetic recombination and DNA repair. Endonuclease that resolves HJ intermediates. Cleaves cruciform DNA by making single-stranded nicks across the HJ at symmetrical positions within the homologous arms, yielding a 5'-phosphate and a 3'-hydroxyl group; requires a central core of homology in the junction. The consensus cleavage sequence is 5'-(A/T)TT(C/G)-3'. Cleavage occurs on the 3'-side of the TT dinucleotide at the point of strand exchange. HJ branch migration catalyzed by RuvA-RuvB allows RuvC to scan DNA until it finds its consensus sequence, where it cleaves and resolves the cruciform DNA. This Stenotrophomonas maltophilia (strain K279a) protein is Crossover junction endodeoxyribonuclease RuvC.